The sequence spans 103 residues: Defensin-like protein 289 (103 aa).

A signal peptide spans 1 to 29 (MATLKTTIFIIFILYISCTMFVNIFRVQA). Disulfide bonds link Cys-33–Cys-50, Cys-39–Cys-55, Cys-43–Cys-57, Cys-72–Cys-92, Cys-78–Cys-98, and Cys-84–Cys-100.

It belongs to the DEFL family.

It is found in the secreted. This chain is Defensin-like protein 289, found in Arabidopsis thaliana (Mouse-ear cress).